A 109-amino-acid polypeptide reads, in one-letter code: Thiosulfate sulfurtransferase GlpE (109 aa).

A Rhodanese domain is found at Ala17–Ala105. Residue Cys65 is the Cysteine persulfide intermediate of the active site.

It belongs to the GlpE family.

The protein resides in the cytoplasm. It catalyses the reaction thiosulfate + hydrogen cyanide = thiocyanate + sulfite + 2 H(+). The catalysed reaction is thiosulfate + [thioredoxin]-dithiol = [thioredoxin]-disulfide + hydrogen sulfide + sulfite + 2 H(+). Functionally, transferase that catalyzes the transfer of sulfur from thiosulfate to thiophilic acceptors such as cyanide or dithiols. May function in a CysM-independent thiosulfate assimilation pathway by catalyzing the conversion of thiosulfate to sulfite, which can then be used for L-cysteine biosynthesis. In Edwardsiella ictaluri (strain 93-146), this protein is Thiosulfate sulfurtransferase GlpE.